The chain runs to 74 residues: Conotoxin VxVIA (74 aa).

Residues 1-22 (MKLTCVLIIAVLFLTAYQLATA) form the signal peptide. Residues 23 to 47 (ASHAKGKQKHRALRPADKHFRFTKR) constitute a propeptide that is removed on maturation. Cystine bridges form between Cys-48–Cys-62, Cys-55–Cys-66, and Cys-61–Cys-73.

In terms of tissue distribution, expressed by the venom duct.

The protein resides in the secreted. Its function is as follows. When injected intracranially in mice, induces a series of symptoms such as quivering, climbing, scratching, barrel rolling and paralysis of limbs. Unexpectedly, no effect is observed on ionic currents when tested on locust DUM neuron. In Conus vexillum (Flag cone), this protein is Conotoxin VxVIA.